Consider the following 282-residue polypeptide: NADPH-dependent 7-cyano-7-deazaguanine reductase (282 aa).

Residue 88–90 coordinates substrate; it reads IES. 90-91 contributes to the NADPH binding site; it reads SK. C190 functions as the Thioimide intermediate in the catalytic mechanism. D197 acts as the Proton donor in catalysis. Residue 229 to 230 coordinates substrate; it reads HE. 258–259 lines the NADPH pocket; that stretch reads RG.

Belongs to the GTP cyclohydrolase I family. QueF type 2 subfamily. Homodimer.

The protein localises to the cytoplasm. The catalysed reaction is 7-aminomethyl-7-carbaguanine + 2 NADP(+) = 7-cyano-7-deazaguanine + 2 NADPH + 3 H(+). The protein operates within tRNA modification; tRNA-queuosine biosynthesis. Functionally, catalyzes the NADPH-dependent reduction of 7-cyano-7-deazaguanine (preQ0) to 7-aminomethyl-7-deazaguanine (preQ1). The polypeptide is NADPH-dependent 7-cyano-7-deazaguanine reductase (Escherichia coli O127:H6 (strain E2348/69 / EPEC)).